We begin with the raw amino-acid sequence, 183 residues long: CKLF-like MARVEL transmembrane domain-containing protein 6 (183 aa).

Methionine 1 carries the N-acetylmethionine modification. Residues 1–20 form a disordered region; that stretch reads MENGAVYSPTTEEDPGPARG. The Cytoplasmic segment spans residues 1 to 39; it reads MENGAVYSPTTEEDPGPARGPRSGLAAYCFLGRLPLLRR. Serine 8 carries the phosphoserine modification. The MARVEL domain occupies 33–160; the sequence is RLPLLRRVLK…DFVTMLYEKR (128 aa). Residues 40 to 60 form a helical membrane-spanning segment; sequence VLKGLQLSLSLLAFICEEVVS. The Extracellular segment spans residues 61–67; that stretch reads QCTLCGG. Residues 68-88 form a helical membrane-spanning segment; sequence LYFFEFVSCSAFLLSLLILIV. The Cytoplasmic segment spans residues 89 to 106; the sequence is YCTPFYERVDTTKVKSSD. A helical transmembrane segment spans residues 107–127; the sequence is FYITLGTGCVFLLASIIFVST. At 128–134 the chain is on the extracellular side; sequence HDRTSAE. A helical transmembrane segment spans residues 135 to 155; that stretch reads IAAIVFGFIASFMFLLDFVTM. The Cytoplasmic portion of the chain corresponds to 156–183; the sequence is LYEKRQESQLRKSENTTRAEALTEPLNA. Threonine 171 carries the post-translational modification Phosphothreonine.

Belongs to the chemokine-like factor family. As to quaternary structure, interacts with PD-L1/CD274 (via transmembrane domain); the interaction is direct. Interacts with CMTM4. Interacts with CD58, ARG1, ENO1 and TMPO.

It is found in the cell membrane. It localises to the early endosome membrane. The protein resides in the recycling endosome membrane. Master regulator of recycling and plasma membrane expression of PD-L1/CD274, an immune inhibitory ligand critical for immune tolerance to self and antitumor immunity. Associates with both constitutive and IFNG-induced PD-L1/CD274 at recycling endosomes, where it protects PD-L1/CD274 from being targeted for lysosomal degradation, likely by preventing its ubiquitination. May stabilize PD-L1/CD274 expression on antigen presenting cells and potentiates inhibitory signaling by PDCD1/CD279, its receptor on T-cells, ultimately triggering T-cell anergy. The polypeptide is CKLF-like MARVEL transmembrane domain-containing protein 6 (CMTM6) (Pongo abelii (Sumatran orangutan)).